A 263-amino-acid chain; its full sequence is 3-methyl-2-oxobutanoate hydroxymethyltransferase (263 aa).

Mg(2+) contacts are provided by Asp43 and Asp82. Residues 43-44 (DS), Asp82, and Lys111 each bind 3-methyl-2-oxobutanoate. Glu113 serves as a coordination point for Mg(2+). The Proton acceptor role is filled by Glu179.

Belongs to the PanB family. As to quaternary structure, homodecamer; pentamer of dimers. Requires Mg(2+) as cofactor.

The protein localises to the cytoplasm. The catalysed reaction is 3-methyl-2-oxobutanoate + (6R)-5,10-methylene-5,6,7,8-tetrahydrofolate + H2O = 2-dehydropantoate + (6S)-5,6,7,8-tetrahydrofolate. Its pathway is cofactor biosynthesis; (R)-pantothenate biosynthesis; (R)-pantoate from 3-methyl-2-oxobutanoate: step 1/2. Its function is as follows. Catalyzes the reversible reaction in which hydroxymethyl group from 5,10-methylenetetrahydrofolate is transferred onto alpha-ketoisovalerate to form ketopantoate. In Neisseria meningitidis serogroup B (strain ATCC BAA-335 / MC58), this protein is 3-methyl-2-oxobutanoate hydroxymethyltransferase.